The sequence spans 383 residues: MGCAGSTLRSGASFEDSRLAAIEDSRFHEVGHHAQFEDSRLAAIEDSRFHEVGHHAQFDEGGRFKQLPPANDDAKLLVADHPSLGVIRLDYDYPPALGDVDHPGSFYYDVFYRVVPGLTFELCQSGELPDDVKQRFIDAITWLDEQGVAGITGDCGFFMYFQALARSVTSKPVFMSSLCQLPAVVCAYAADEQIALFTANGESLKPMREIIKKECGVDPDDTRFVIVGCEDVPGFEAVANGDRVDVDSVVPHLVRLAEDTVAKHAGTAKPIRAILFECTELPPYSDAVRAATRLPVFDSITCCNSMLASLMDNPRFGVNNWHLSWDGAHTAHRFGDNVPPHLKGKLVNREHPENIARWNASLAERSSFSSAQQESIGRGSRKL.

This sequence belongs to the aspartate/glutamate racemases family. ALMA1 subfamily. Homotetramer.

The enzyme catalyses S,S-dimethyl-beta-propiothetin = acrylate + dimethyl sulfide + H(+). Mediates cleavage of dimethylsulfoniopropionate (DMSP) into dimethyl sulfide (DMS) and acrylate. DMS is the principal form by which sulfur is transported from oceans to the atmosphere and is a key component of the ocean sulfur cycle. This is Dimethylsulfoniopropionate lyase 3 from Emiliania huxleyi (strain CCMP1516).